Reading from the N-terminus, the 85-residue chain is Hepcidin (85 aa).

A signal peptide spans 1 to 22 (MALSTRIQAACLLLLLLASVAS). Residues 23-54 (VSVLPHQTGQLTDLRAQDTAGAEAGLQPTLQL) constitute a propeptide that is removed on maturation. Disulfide bonds link C67–C83, C70–C73, C71–C79, and C74–C82.

The protein belongs to the hepcidin family. Interacts with SLC40A1; this interaction promotes SLC40A1 rapid ubiquitination.

It is found in the secreted. In terms of biological role, liver-produced hormone that constitutes the main circulating regulator of iron absorption and distribution across tissues. Acts by promoting endocytosis and degradation of ferroportin/SLC40A1, leading to the retention of iron in iron-exporting cells and decreased flow of iron into plasma. Controls the major flows of iron into plasma: absorption of dietary iron in the intestine, recycling of iron by macrophages, which phagocytose old erythrocytes and other cells, and mobilization of stored iron from hepatocytes. Its function is as follows. Has strong antimicrobial activity against E.coli ML35P N.cinerea and weaker against S.epidermidis, S.aureus and group b streptococcus bacteria. Active against the fungus C.albicans. No activity against P.aeruginosa. This Canis lupus familiaris (Dog) protein is Hepcidin (HAMP).